The following is a 263-amino-acid chain: Small ribosomal subunit protein uS3 (263 aa).

Positions 39-107 constitute a KH type-2 domain; that stretch reads VREYLKKKLK…PVHVNIEEIR (69 aa). The segment at 211–263 is disordered; the sequence is GELPPEAATPREEERRPRRAPRGDRPDGARTGRPGGRGRGPRKADAAPAPEGE. Positions 219–240 are enriched in basic and acidic residues; that stretch reads TPREEERRPRRAPRGDRPDGAR.

The protein belongs to the universal ribosomal protein uS3 family. As to quaternary structure, part of the 30S ribosomal subunit. Forms a tight complex with proteins S10 and S14.

Functionally, binds the lower part of the 30S subunit head. Binds mRNA in the 70S ribosome, positioning it for translation. This Bordetella pertussis (strain Tohama I / ATCC BAA-589 / NCTC 13251) protein is Small ribosomal subunit protein uS3.